A 506-amino-acid polypeptide reads, in one-letter code: 2-isopropylmalate synthase (506 aa).

The region spanning 4–266 (ILFMDTTLRD…EPSMTLKEIK (263 aa)) is the Pyruvate carboxyltransferase domain. Mn(2+) contacts are provided by Asp13, His201, His203, and Asn237. Residues 390–506 (NITQLQVHFV…KLKSFIQLVK (117 aa)) form a regulatory domain region.

Belongs to the alpha-IPM synthase/homocitrate synthase family. LeuA type 1 subfamily. As to quaternary structure, homodimer. Mn(2+) serves as cofactor.

The protein resides in the cytoplasm. The catalysed reaction is 3-methyl-2-oxobutanoate + acetyl-CoA + H2O = (2S)-2-isopropylmalate + CoA + H(+). Its pathway is amino-acid biosynthesis; L-leucine biosynthesis; L-leucine from 3-methyl-2-oxobutanoate: step 1/4. Catalyzes the condensation of the acetyl group of acetyl-CoA with 3-methyl-2-oxobutanoate (2-ketoisovalerate) to form 3-carboxy-3-hydroxy-4-methylpentanoate (2-isopropylmalate). This chain is 2-isopropylmalate synthase, found in Bacillus anthracis (strain A0248).